The chain runs to 489 residues: MRVLHVCSELYPILKTGGLADVTAALPPALAGFGVDSRVLVPGFPAFINAIKDKQLLINIPSRFGAEEINIFLAKISNTKIDIYVIDAPSLFARPGNPYADSSNQAYADNYLRFALLGWVAARISEGLDAKWKPEIVHSHDWHAGLVPAYIKASELASGKKAVKTVFTVHNLAYQGLFPMSVFAELDLPGIFLSMNGLEFYGQVSFMKAGLYFADKITTVSPTYAKEIQIYEQGCGLEGLLADRHNDLYGVLNGVDPQIWNPKKDSLIATNYSSTTVATGKAKCKLALQQMMGLAEKEDALLFGIVTRLTEQKGLNLLIEAIGEITSRGGQIVLLGSGDKALEEVFLAAAKKYSKSIAVQIGYDEEQAHRIIAGSDVIMVPSRFEPCGLTQLYGLTYGTLPLVHKVGGLADTVIDSSLENLADGTATGFVFDEFSVESLTLVIRRAFALYNRKTDWKKVRKTAMQQQVTWDSSAEKIYQIYKNLVRENN.

An ADP-alpha-D-glucose-binding site is contributed by K15.

Belongs to the glycosyltransferase 1 family. Bacterial/plant glycogen synthase subfamily.

The catalysed reaction is [(1-&gt;4)-alpha-D-glucosyl](n) + ADP-alpha-D-glucose = [(1-&gt;4)-alpha-D-glucosyl](n+1) + ADP + H(+). It participates in glycan biosynthesis; glycogen biosynthesis. Its function is as follows. Synthesizes alpha-1,4-glucan chains using ADP-glucose. The sequence is that of Glycogen synthase from Francisella tularensis subsp. mediasiatica (strain FSC147).